Reading from the N-terminus, the 131-residue chain is Large ribosomal subunit protein mL60 (131 aa).

A mitochondrion-targeting transit peptide spans 1-12 (MFGPFKLTSPVA).

The protein belongs to the mitochondrion-specific ribosomal protein mL60 family. Component of the mitochondrial large ribosomal subunit (mt-LSU). Mature yeast 74S mitochondrial ribosomes consist of a small (37S) and a large (54S) subunit. The 37S small subunit contains a 15S ribosomal RNA (15S mt-rRNA) and 34 different proteins. The 54S large subunit contains a 21S rRNA (21S mt-rRNA) and 46 different proteins.

It is found in the mitochondrion. Component of the mitochondrial ribosome (mitoribosome), a dedicated translation machinery responsible for the synthesis of mitochondrial genome-encoded proteins, including at least some of the essential transmembrane subunits of the mitochondrial respiratory chain. The mitoribosomes are attached to the mitochondrial inner membrane and translation products are cotranslationally integrated into the membrane. In Saccharomyces cerevisiae (strain ATCC 204508 / S288c) (Baker's yeast), this protein is Large ribosomal subunit protein mL60 (MRPL31).